A 565-amino-acid chain; its full sequence is MRLLARHAIRLLGQENSAGEVASLSRGAIRLKATTGYLNLATASVQPLEPEKQVLRKNSPLTDSFGRHHTYLRISLTERCNLRCDYCMPAEGVPLQPKNKLLTTEEILRLARIFVEQGVRKIRLTGGEPTVRRDIVEIVAQMKALPELEQIGITTNGLVLTRLLLPLQRAGLDNLNISLDTLKRDRFEKITRRKGWERVIAGIDLAVQLGYRPKVNCVLMRDFNEDEICDFVEFTRNRPVDVRFIEYMPFSGNKWHTERLISYKDTLQIIRQRWPDFKALPNGPNDTSKAYAVPGFKGQVGFITSMTEHFCGTCNRLRLTADGNIKVCLFGNKEFSLRDAMRDESVSEEQLVDLIGAAVQRKKKQHADAAPRLHHHLHPYSYHHAYHTSRLQLQARNYSQLTHVDGQGKAQMVDVGAKPSTTRLARAEATVQVGEKLTQLIADNQVAKGDVLTVAQIAGIMGAKRTAELIPLCHNISLSSVKVQATLLKTEQSVRLEATVRCSGQTGVEMEALTAVSVAALTVYDMCKAVSHDICITNVRLLSKSGGKRDFQREEPQNGIVTEVE.

A molybdenum cofactor biosynthesis protein A region spans residues Leu-3–Ala-367. Positions Ser-64–Asp-276 constitute a Radical SAM core domain. GTP is bound at residue Arg-73. Residues Cys-80 and Cys-84 each coordinate [4Fe-4S] cluster. Tyr-86 is an S-adenosyl-L-methionine binding site. Cys-87 contacts [4Fe-4S] cluster. Arg-123 is a binding site for GTP. An S-adenosyl-L-methionine-binding site is contributed by Gly-127. Thr-154 is a GTP binding site. Ser-178 provides a ligand contact to S-adenosyl-L-methionine. Lys-214 provides a ligand contact to GTP. Met-248 is an S-adenosyl-L-methionine binding site. Residues Cys-311 and Cys-314 each contribute to the [4Fe-4S] cluster site. Residue Arg-316–Arg-318 participates in GTP binding. Cys-328 lines the [4Fe-4S] cluster pocket. Asp-525 serves as the catalytic For molybdenum cofactor biosynthesis protein C activity.

In the C-terminal section; belongs to the MoaC family. This sequence in the N-terminal section; belongs to the radical SAM superfamily. MoaA family. As to quaternary structure, isoform Mocs1a and isoform Mocs1b probably form a heterooligomer. It depends on [4Fe-4S] cluster as a cofactor.

The enzyme catalyses GTP + AH2 + S-adenosyl-L-methionine = (8S)-3',8-cyclo-7,8-dihydroguanosine 5'-triphosphate + 5'-deoxyadenosine + L-methionine + A + H(+). It carries out the reaction (8S)-3',8-cyclo-7,8-dihydroguanosine 5'-triphosphate = cyclic pyranopterin phosphate + diphosphate. Its pathway is cofactor biosynthesis; molybdopterin biosynthesis. Isoform Mocs1a and isoform Mocs1b probably form a complex that catalyzes the conversion of 5'-GTP to cyclic pyranopterin monophosphate (cPMP). Mocs1a catalyzes the cyclization of GTP to (8S)-3',8-cyclo-7,8-dihydroguanosine 5'-triphosphate and Mocs1b catalyzes the subsequent conversion of (8S)-3',8-cyclo-7,8-dihydroguanosine 5'-triphosphate to cPMP. In Drosophila melanogaster (Fruit fly), this protein is Molybdenum cofactor biosynthesis protein 1 (Mocs1).